The chain runs to 365 residues: Fructose-1,6-bisphosphate aldolase/phosphatase (365 aa).

The Proton acceptor; for FBP phosphatase activity role is filled by aspartate 11. The Mg(2+) site is built by aspartate 11, histidine 18, aspartate 52, and aspartate 53. Histidine 18 lines the beta-D-fructose 1,6-bisphosphate pocket. Residue histidine 18 coordinates dihydroxyacetone phosphate. Tyrosine 90 contacts beta-D-fructose 1,6-bisphosphate. Position 94 (glutamine 94) interacts with Mg(2+). Glycine 103–asparagine 104 contributes to the beta-D-fructose 1,6-bisphosphate binding site. Residue aspartate 131 participates in Mg(2+) binding. Lysine 132 provides a ligand contact to beta-D-fructose 1,6-bisphosphate. Lysine 132 contacts dihydroxyacetone phosphate. Tyrosine 228 (proton donor/acceptor; for FBP aldolase activity) is an active-site residue. Mg(2+) is bound by residues lysine 231, aspartate 232, and aspartate 233. The Schiff-base intermediate with DHAP; for FBP aldolase activity role is filled by lysine 231. Residues glutamine 241–serine 242, arginine 265, aspartate 286, and tyrosine 347 contribute to the beta-D-fructose 1,6-bisphosphate site. Residues arginine 265 and aspartate 286 each contribute to the dihydroxyacetone phosphate site.

This sequence belongs to the FBP aldolase/phosphatase family. In terms of assembly, homooctamer; dimer of tetramers. Requires Mg(2+) as cofactor.

The enzyme catalyses beta-D-fructose 1,6-bisphosphate + H2O = beta-D-fructose 6-phosphate + phosphate. The catalysed reaction is beta-D-fructose 1,6-bisphosphate = D-glyceraldehyde 3-phosphate + dihydroxyacetone phosphate. It functions in the pathway carbohydrate biosynthesis; gluconeogenesis. Its function is as follows. Catalyzes two subsequent steps in gluconeogenesis: the aldol condensation of dihydroxyacetone phosphate (DHAP) and glyceraldehyde-3-phosphate (GA3P) to fructose-1,6-bisphosphate (FBP), and the dephosphorylation of FBP to fructose-6-phosphate (F6P). In Methanothermobacter marburgensis (strain ATCC BAA-927 / DSM 2133 / JCM 14651 / NBRC 100331 / OCM 82 / Marburg) (Methanobacterium thermoautotrophicum), this protein is Fructose-1,6-bisphosphate aldolase/phosphatase.